The following is a 626-amino-acid chain: Transketolase-like protein 2 (626 aa).

Residues Ser-41, His-78, and Gly-124–Leu-126 contribute to the thiamine diphosphate site. Mg(2+) is bound at residue Asp-156. Positions 157 and 186 each coordinate thiamine diphosphate. Asn-186 and Leu-188 together coordinate Mg(2+). Residues Lys-248 and His-262 each contribute to the thiamine diphosphate site. Substrate is bound by residues His-262 and Ser-349. Residues Glu-370 and Phe-396 each coordinate thiamine diphosphate. Glu-370 functions as the Proton donor in the catalytic mechanism. The substrate site is built by His-420 and Asp-428. Gln-432 serves as a coordination point for thiamine diphosphate.

This sequence belongs to the transketolase family. As to quaternary structure, homodimer. It depends on Mg(2+) as a cofactor. Requires Ca(2+) as cofactor. Mn(2+) is required as a cofactor. The cofactor is Co(2+). Thiamine diphosphate serves as cofactor. In terms of tissue distribution, overexpressed in hepatoma cancer cells.

The enzyme catalyses D-sedoheptulose 7-phosphate + D-glyceraldehyde 3-phosphate = aldehydo-D-ribose 5-phosphate + D-xylulose 5-phosphate. Its function is as follows. Plays an essential role in total transketolase activity and cell proliferation in cancer cells; after transfection with anti-TKTL1 siRNA, total transketolase activity dramatically decreases and proliferation was significantly inhibited in cancer cells. Plays a pivotal role in carcinogenesis. The protein is Transketolase-like protein 2 (TKTL2) of Homo sapiens (Human).